The chain runs to 515 residues: Protein disulfide-isomerase (515 aa).

An N-terminal signal peptide occupies residues 1–20 (MRTFAPWILSLLGASAVASA). Thioredoxin domains follow at residues 21 to 136 (ADAT…QSLP) and 343 to 470 (VLDD…ENGK). Residues Cys58, Cys61, Cys393, and Cys396 each act as nucleophile in the active site. 2 cysteine pairs are disulfide-bonded: Cys58-Cys61 and Cys393-Cys396. 2 stretches are compositionally biased toward basic and acidic residues: residues 472-496 (KVDA…RAAS) and 506-515 (SDDKSEHDEL). The disordered stretch occupies residues 472-515 (KVDALEVDPKKEQESGDATETRAASDETETPAATSDDKSEHDEL). A Prevents secretion from ER motif is present at residues 512 to 515 (HDEL).

It belongs to the protein disulfide isomerase family.

The protein localises to the endoplasmic reticulum lumen. It carries out the reaction Catalyzes the rearrangement of -S-S- bonds in proteins.. Participates in the folding of proteins containing disulfide bonds, may be involved in glycosylation, prolyl hydroxylation and triglyceride transfer. The protein is Protein disulfide-isomerase (pdiA) of Aspergillus oryzae (strain ATCC 42149 / RIB 40) (Yellow koji mold).